A 354-amino-acid chain; its full sequence is Uroporphyrinogen decarboxylase (354 aa).

Substrate-binding positions include 27–31 (RQAGR), D77, Y154, S209, and H327.

This sequence belongs to the uroporphyrinogen decarboxylase family. As to quaternary structure, homodimer.

The protein resides in the cytoplasm. It catalyses the reaction uroporphyrinogen III + 4 H(+) = coproporphyrinogen III + 4 CO2. The protein operates within porphyrin-containing compound metabolism; protoporphyrin-IX biosynthesis; coproporphyrinogen-III from 5-aminolevulinate: step 4/4. Catalyzes the decarboxylation of four acetate groups of uroporphyrinogen-III to yield coproporphyrinogen-III. The chain is Uroporphyrinogen decarboxylase from Shewanella baltica (strain OS223).